Consider the following 120-residue polypeptide: Glycine cleavage system H protein (120 aa).

Residues 19–101 (DGTVGITDHA…YEGGWLFKLE (83 aa)) enclose the Lipoyl-binding domain. The residue at position 60 (lysine 60) is an N6-lipoyllysine.

This sequence belongs to the GcvH family. As to quaternary structure, the glycine cleavage system is composed of four proteins: P, T, L and H. The cofactor is (R)-lipoate.

Functionally, the glycine cleavage system catalyzes the degradation of glycine. The H protein shuttles the methylamine group of glycine from the P protein to the T protein. The sequence is that of Glycine cleavage system H protein from Deinococcus deserti (strain DSM 17065 / CIP 109153 / LMG 22923 / VCD115).